A 300-amino-acid polypeptide reads, in one-letter code: MKSYMTQRLDEYRDGNEDKGRLLVSCPDQPGIVSAVSAFLFEHGANIIESNQYTTDPEGGRFFLRIEFDCAGIREKKSSLQAAFASVAEKFDMTWSLTLASELKRVAIFVSKELHCLHELIWEWQTGNLMAEIAVVISNHEEARELVERLNIPFHYMKANKDIRAEVEKKQLELLEQYDVDVIVLARYMQILTPDFVSAHPNRIINIHHSFLPAFIGANPYKRAYERGVKLIGATSHYVTNDLDEGPIIEQDIERVDHRDNAEALKNIGRTIERSVLARAVKWHLEDRVIVHENKTIVFN.

In terms of domain architecture, ACT spans 21–102; sequence RLLVSCPDQP…MTWSLTLASE (82 aa). Residue D244 is part of the active site.

It belongs to the PurU family.

It catalyses the reaction (6R)-10-formyltetrahydrofolate + H2O = (6S)-5,6,7,8-tetrahydrofolate + formate + H(+). The protein operates within purine metabolism; IMP biosynthesis via de novo pathway; formate from 10-formyl-5,6,7,8-tetrahydrofolate: step 1/1. Its function is as follows. Catalyzes the hydrolysis of 10-formyltetrahydrofolate (formyl-FH4) to formate and tetrahydrofolate (FH4). This is Formyltetrahydrofolate deformylase from Bacillus subtilis (strain 168).